A 389-amino-acid chain; its full sequence is Methionyl-tRNA formyltransferase, mitochondrial (389 aa).

The protein belongs to the Fmt family.

It is found in the mitochondrion. The enzyme catalyses L-methionyl-tRNA(fMet) + (6R)-10-formyltetrahydrofolate = N-formyl-L-methionyl-tRNA(fMet) + (6S)-5,6,7,8-tetrahydrofolate + H(+). In terms of biological role, methionyl-tRNA formyltransferase that formylates methionyl-tRNA in mitochondria and is crucial for translation initiation. The sequence is that of Methionyl-tRNA formyltransferase, mitochondrial (MTFMT) from Homo sapiens (Human).